The following is a 233-amino-acid chain: Small ribosomal subunit protein uS2 (233 aa).

Belongs to the universal ribosomal protein uS2 family.

The protein is Small ribosomal subunit protein uS2 of Clostridium novyi (strain NT).